The sequence spans 129 residues: UPF0102 protein Clim_0016 (129 aa).

It belongs to the UPF0102 family.

This chain is UPF0102 protein Clim_0016, found in Chlorobium limicola (strain DSM 245 / NBRC 103803 / 6330).